The primary structure comprises 575 residues: Isocitrate dehydrogenase kinase/phosphatase (575 aa).

Residues 315–321 (APGVKGM) and Lys-336 each bind ATP. Residue Asp-371 is part of the active site.

This sequence belongs to the AceK family.

It localises to the cytoplasm. The enzyme catalyses L-seryl-[isocitrate dehydrogenase] + ATP = O-phospho-L-seryl-[isocitrate dehydrogenase] + ADP + H(+). Bifunctional enzyme which can phosphorylate or dephosphorylate isocitrate dehydrogenase (IDH) on a specific serine residue. This is a regulatory mechanism which enables bacteria to bypass the Krebs cycle via the glyoxylate shunt in response to the source of carbon. When bacteria are grown on glucose, IDH is fully active and unphosphorylated, but when grown on acetate or ethanol, the activity of IDH declines drastically concomitant with its phosphorylation. This chain is Isocitrate dehydrogenase kinase/phosphatase, found in Yersinia pseudotuberculosis serotype O:1b (strain IP 31758).